The following is a 269-amino-acid chain: MSYEIKICDILKGAAMEGQYKGAQRGAKCEEIANELTRRGVKNNKGEVITKGGVSHWLEGRREPNFDTLAELCDMFGVYALMPMRGGKWIRVHPEDRGEMELREAVAERDAIIDDLKARIAELEAALANKQVPAEAEEMGGEKVEEVAAEQAPNDEKEMGAKEWVNPNPKKYSVGMLCQVLAAMGGEYLGNNAGLQQKITVLDNDGNRKPISNGAFYRLIEQAKGRGLISVEQEIKHKKDENGNQIGKGKKGDKLITLLPNWIDKLGDE.

This is an uncharacterized protein from Escherichia coli (strain K12).